Reading from the N-terminus, the 123-residue chain is Small ribosomal subunit protein uS12 (123 aa).

3-methylthioaspartic acid is present on Asp-89.

Belongs to the universal ribosomal protein uS12 family. As to quaternary structure, part of the 30S ribosomal subunit. Contacts proteins S8 and S17. May interact with IF1 in the 30S initiation complex.

Its function is as follows. With S4 and S5 plays an important role in translational accuracy. Interacts with and stabilizes bases of the 16S rRNA that are involved in tRNA selection in the A site and with the mRNA backbone. Located at the interface of the 30S and 50S subunits, it traverses the body of the 30S subunit contacting proteins on the other side and probably holding the rRNA structure together. The combined cluster of proteins S8, S12 and S17 appears to hold together the shoulder and platform of the 30S subunit. This chain is Small ribosomal subunit protein uS12, found in Bradyrhizobium diazoefficiens (strain JCM 10833 / BCRC 13528 / IAM 13628 / NBRC 14792 / USDA 110).